A 414-amino-acid polypeptide reads, in one-letter code: MALISLAIDYKKSPIEVRSEFALSGLDVSMLYRSILAIDNVVHAVILSTCNRTEVYLEISDLIVVDDILVWWQGYVRNPNYKIKDYFKLRQGTEVIMHLMKLACGLESMVLGEPQILGQVKDSYTLSKKNHAIGKELDRVFQKVFATAKRVRSETRIGYCPVSVAFSAITLAKRQLDNISSKNVLIIGAGQTGELLFRHVTALAPKQIMLANRTIEKAQKITSVFRNASAHYLSELPQLIKKADIIIAAVNVLEYIVTCKYVGDKPRVFIDISIPQALDPKLGELEQNVYYCVDDINAVIEDNKDKRKYESSKAQKIIVKSLEEYLEKEKAIISNSAIKELFQKADGLVDLSLEKSLAKIRNGKDAEEIIKRFAYEIKKKVLHYPVVGMKEASKQGRSDCLVCMKRMFGLNVEK.

Substrate is bound by residues 49-52 (TCNR), Ser108, 113-115 (EPQ), and Gln119. The active-site Nucleophile is Cys50. 188–193 (GAGQTG) serves as a coordination point for NADP(+).

Belongs to the glutamyl-tRNA reductase family. As to quaternary structure, homodimer.

The catalysed reaction is (S)-4-amino-5-oxopentanoate + tRNA(Glu) + NADP(+) = L-glutamyl-tRNA(Glu) + NADPH + H(+). The protein operates within porphyrin-containing compound metabolism; protoporphyrin-IX biosynthesis; 5-aminolevulinate from L-glutamyl-tRNA(Glu): step 1/2. In terms of biological role, catalyzes the NADPH-dependent reduction of glutamyl-tRNA(Glu) to glutamate 1-semialdehyde (GSA). This is Glutamyl-tRNA reductase from Francisella tularensis subsp. holarctica (strain FTNF002-00 / FTA).